Here is a 2909-residue protein sequence, read N- to C-terminus: MVFRATREPFRLPLVAAFIALFLLKGVTCQLQLGTSTLQKNMWTTVKFDEPMIDPVVFVSPPEAPTNSFALVLIGGVTTSGFRARVYFPSCEYSPSGGTLYAVRWLAVEATSAGYYDSSNRQTIDWTAHAVTLASSGTIPAGYVWSQSFSAWEDRPGTPGVLIGVQNHREMISAMYWSSEYLNPLVINSNSGGTLTFSFLRQISHRIGFTLKVGIFQYDARRGAVINGVNLVAQRYDLKVNEVLPVADVVAGGTTPATFAVQWVTPTEAPLALVVKPKLLPDGSYSESLVAVEDCRNGATYEPHAFDVTHAFTGNPASTAHRINGGPNCFRPSASVPTWLTEPCKLACESLWTANSDDYWNCDDVNACFETDFRSAETLMALPQIDESIADVLVTSCNFATRTADLIKQYEYAVNLKVDDIAIGTMWSTSSHCGGDKMEVEIVGAFYEKLGVSILTGSTCEVQDVSREVEALCKAEGGIGCSISAAQIYELIMNYPGVCFALEDAELQIFFNCTFASTSPFDCELYESKGFDQENGDCMCPNALAACTREEATFKSGWLQNLNKSYQYMLHGQIRYVAKSSVFQAFYEAPETSSAGDNTLCARMNTIVVCKNPTPVSAVVGNRGPNCYVIEHGSQYCHLPCLTAWDAFLAAKDLPQQSDYQAEFERFWLSFDFPAIPPHTSQSLLEQLQRCRFATRPATAPLQQYEDEIDVQLPDYGAVIIPLGCDKLHHREVVQALVGSASSIMLGVHEPGCRYEDATETVQRECKAAVSARKTTCEIDSSLFTSKDILCNTSTIKLIIRGTCIPGPYLPTNYTCALYPTTGVVSRDGRSCTCPNSAYPCTYEEGQLTASRWKNEVNTGATVSLANNVVWTAPPGTSEYTYTHTDAYDYVCSTDEHHFVLCKDLTPSALPLTEREPHCLNSFSVKPDASTVDDRDCQDQCASLFATRCRQSFYKWLCVAQGLPECYIPNTDSFTCQIDTNPSAYNYSYGSCGCSGAYPPCSRNEANATRLDWITAFRALSHKKGVVVARGKQALWTENPDRWRYENGMLQGGGCLNNSWFVGVFCGAHLSVTPPARGDVLPLCSSAAKVENPDTPYPACRVLCAQVLNECKKVFSTTEGAAAYASVFDCFKARGKGTTLDNCTYELGPENRATGVAELHTGWTVASASWSRVLFDVEFADPPVVFLGIPKDTQPFYTPSVRLVTKTSFEVKLYRNNCGLDDTRSSSAPVSWMAIPEGAYLTDFVENPVRVMKLPMTTRTPTVLTFSLSGLKEPEEMVALAQVQDVTPTSVSTDRVAVVISNLKTNSLELSLVVDESVNFSTVAVGILISGKQNPDLAAGLSPLLNRYHLQTFRIPAAAYSATSILGEGLYLSGGIMPHVFAAAIQTRSMTKELNESDRVVISRRATTTPFTWSALLWKKTCEAKHMFEAVENPSDLIIAGIYVEARKDEPSAILGNRHDLCLSFIGQSFESGVVATCMGACRSALPASVQLHCQDECALNIFAPSVHTKCMTDCESLLVAQYEECAGQCTATGTASCQRKCKQFLGNKCDSTASSDVAACLEFVTPPSVFEQCTLLVEYSVSEGGPSDGFEIEEETTPSQTYENCIIVDMRDERFTAFTGWDSRVASCKCPNDFRACTSETVNTQNHWRTELLASAGLCKEQPDGRFNAVTQQLWSTTGDLCALAADEQQPPISWASNMLPAYVDQDIVLDNSTIRSGDYQCREIWHYVVCPAAATSTTTQEPPVPPFTATLNTAIVGEWGEWSACTGTCFSQWWTPKRTRTRLVLAELSHSQIPSVSETATCLDLPPCGTVCWEREWTEWSECKLFTIVMGQGLEYFRQQIKPVFDFVEEACGLDEHERYERCGEEQDNGETPATSTLQTDSLLETRSLTVSHGTAARALPRVSMDPALERPSFASLHGTRSHVPASTDAKIIERRKGIMSRRRSVPPSGYLEETAEQVAHGGESEQSGKASQNGSRRHRASRKQKRDLESIYSDASVRGSGESTLHGTGTNAYRDQIEWTSKSSSRSAIRDSGARGAEAGTSLLQKARRARRGAGRFRKSRSQARNQTPDKSCSVVSEWSGCDSPCLPHKGSTPRRYRLAVPGQNEANYCTVPLSGTEHLCTDLPQCAHPNFDCAKVTASRLTDEDIAACKAVCVEVVKTCETMMSAVFSLYTSLEQCALVQFQEYEQFPGQCHIPEEYTSTRRPTKCFPSRTRRRVASGELPFIFQVSTASGTSPSATSDAASSVAESFVSTGTASAPSSRVMNALAFEASASQTSIDSCECYDPADEPCTAQEARDSLFDSLYLFLTHPLCAESPAAEGALFTMSEPNQTADAASYFALRGLGRMHCPVPMYKSSTEVKGVLTPKRVTFSEFKTKEDLNEFCHKGLSNWRQNVPPEIIGSASFPNCMLVTPREGAEPQDCALLCSETMSSCSAASLSFVELSQCVQDKLTESDFYSKCSAPEVLAPGEGIILCKKKVSTCDYTEWSEWSTCTATCFNWDEGVIPLRVRSRDFASSSADSRVLCRLESQNDAIQTEKCDWMPVCPEAEGEEEDDATGGVEPRGEPIVPPWSPERPTDENNQAMGSEDIVSGTVECYVTNMGTIMTSYYRGYNQEYHGCNCPGGRRPCTRAEAVASLDLWTKDSGGLCDQDMATMISAAEGEAFFCATGSFGKIDTSLSESSCASSEYQYVLCEGHPYEGIANLTTWVICLLLGVGGGICFVLSCVQYSSDIQKLLGLAGSYPVLVQNVTELQERESHKLRRQGNISATSERSDAHALSLSDSGWDVDGNQSAGSAFPEEEPWQFEDRDEEPLLSTRKYSRNLGSAGIPEPSEIGQTSPTQQRVPRASLAAQRSTCQLSSRLGQANSPEQSLERRSLKLRDSHADVELQRTLRKEMKGNQVWDKTV.

An N-terminal signal peptide occupies residues 1 to 29 (MVFRATREPFRLPLVAAFIALFLLKGVTC). N-linked (GlcNAc...) asparagine glycosylation is found at Asn512, Asn563, Asn792, Asn813, Asn986, Asn1007, Asn1057, Asn1142, Asn1319, Asn1395, and Asn1713. The 57-residue stretch at 1755 to 1811 (TAIVGEWGEWSACTGTCFSQWWTPKRTRTRLVLAELSHSQIPSVSETATCLDLPPCG) folds into the TSP type-1 1 domain. The segment at 1937–2073 (RRKGIMSRRR…RSQARNQTPD (137 aa)) is disordered. A compositionally biased stretch (polar residues) spans 1967 to 1977 (SEQSGKASQNG). N-linked (GlcNAc...) asparagine glycosylation occurs at Asn1976. The segment covering 1978–1988 (SRRHRASRKQK) has biased composition (basic residues). The span at 2004–2016 (GESTLHGTGTNAY) shows a compositional bias: polar residues. The segment covering 2049 to 2065 (KARRARRGAGRFRKSRS) has biased composition (basic residues). N-linked (GlcNAc...) asparagine glycosylation is present at Asn2333. The region spanning 2484-2549 (TCDYTEWSEW…EKCDWMPVCP (66 aa)) is the TSP type-1 2 domain. Disulfide bonds link Cys2485/Cys2528, Cys2496/Cys2500, and Cys2542/Cys2548. Positions 2552–2587 (EGEEEDDATGGVEPRGEPIVPPWSPERPTDENNQAM) are disordered. Asn2706 carries an N-linked (GlcNAc...) asparagine glycan. The chain crosses the membrane as a helical span at residues 2709 to 2729 (TWVICLLLGVGGGICFVLSCV). Residues Asn2751, Asn2768, and Asn2793 are each glycosylated (N-linked (GlcNAc...) asparagine). The disordered stretch occupies residues 2759 to 2846 (ESHKLRRQGN…IGQTSPTQQR (88 aa)). Acidic residues predominate over residues 2801-2815 (PEEEPWQFEDRDEEP). Polar residues predominate over residues 2837 to 2846 (IGQTSPTQQR).

In terms of assembly, component of a complex, at least composed of cysteine repeat modular protein A (CRMPa), cysteine repeat modular protein B (CRMPb), micronemal protein 15 (MIC15) and thrombospondin type 1 domain-containing protein (TSP1).

It is found in the membrane. Required for rhoptry secretion. Plays a role in host cell invasion. This is Micronemal protein 15 from Toxoplasma gondii.